Here is a 446-residue protein sequence, read N- to C-terminus: Glucarate dehydratase (446 aa).

Residues His32, Thr103, Tyr150, and Lys205 each coordinate substrate. Residue Lys207 is the Proton acceptor of the active site. The Mg(2+) site is built by Asp235, Glu266, and Asn289. Substrate is bound at residue 235–237 (DPN). Substrate-binding positions include Asn289, 339-341 (HSN), His368, and Arg422. The active-site Proton acceptor is the His339.

This sequence belongs to the mandelate racemase/muconate lactonizing enzyme family. GlucD subfamily. Homodimer. Mg(2+) serves as cofactor.

It catalyses the reaction D-glucarate = 5-dehydro-4-deoxy-D-glucarate + H2O. The protein operates within carbohydrate acid metabolism; D-glucarate degradation; 2,5-dioxopentanoate from D-glucarate: step 1/2. Catalyzes the dehydration of glucarate to 5-keto-4-deoxy-D-glucarate (5-kdGluc). Also acts on L-idarate. The chain is Glucarate dehydratase (gudD) from Escherichia coli O157:H7.